A 291-amino-acid polypeptide reads, in one-letter code: Tetrahydromethanopterin:alpha-L-glutamate ligase (291 aa).

The 186-residue stretch at Ser-101–Ile-286 folds into the ATP-grasp domain. ATP-binding positions include Lys-136, Gln-175–Asp-187, and Arg-203. 3 residues coordinate Mg(2+): Asp-247, Glu-259, and Asn-261. Mn(2+)-binding residues include Asp-247, Glu-259, and Asn-261.

It belongs to the RimK family. MptN subfamily. In terms of assembly, homodimer. Mg(2+) is required as a cofactor. The cofactor is Mn(2+).

The enzyme catalyses 5,6,7,8-tetrahydromethanopterin + L-glutamate + ATP = 5,6,7,8-tetrahydrosarcinapterin + ADP + phosphate + H(+). It functions in the pathway cofactor biosynthesis; 5,6,7,8-tetrahydrosarcinapterin biosynthesis. Catalyzes the ATP or GTP-dependent addition of one L-glutamate molecule to tetrahydromethanopterin, producing tetrahydrosarcinapterin. The protein is Tetrahydromethanopterin:alpha-L-glutamate ligase (mptN) of Methanocaldococcus jannaschii (strain ATCC 43067 / DSM 2661 / JAL-1 / JCM 10045 / NBRC 100440) (Methanococcus jannaschii).